The primary structure comprises 113 residues: Nucleoid-associated protein SYNW0027 (113 aa).

This sequence belongs to the YbaB/EbfC family. Homodimer.

The protein localises to the cytoplasm. Its subcellular location is the nucleoid. Functionally, binds to DNA and alters its conformation. May be involved in regulation of gene expression, nucleoid organization and DNA protection. The protein is Nucleoid-associated protein SYNW0027 of Parasynechococcus marenigrum (strain WH8102).